The chain runs to 160 residues: Sperm acrosome-associated protein 5 (160 aa).

Positions 1 to 21 (MKVCSIVVVILAVLLIAKLDA) are cleaved as a signal peptide. In terms of domain architecture, C-type lysozyme spans 22–150 (KIYERCELAK…SEWLKGCSVR (129 aa)). 4 disulfides stabilise this stretch: cysteine 27–cysteine 147, cysteine 51–cysteine 135, cysteine 85–cysteine 100, and cysteine 96–cysteine 114. Glutamate 56 is an active-site residue.

This sequence belongs to the glycosyl hydrolase 22 family.

The protein localises to the secreted. It catalyses the reaction Hydrolysis of (1-&gt;4)-beta-linkages between N-acetylmuramic acid and N-acetyl-D-glucosamine residues in a peptidoglycan and between N-acetyl-D-glucosamine residues in chitodextrins.. The protein is Sperm acrosome-associated protein 5 (Spaca5) of Mus musculus (Mouse).